Consider the following 231-residue polypeptide: Probable amino-acid ABC transporter permease protein y4tG (231 aa).

6 helical membrane-spanning segments follow: residues threonine 9–isoleucine 29, leucine 32–leucine 52, alanine 64–tyrosine 84, valine 86–isoleucine 106, tyrosine 161–leucine 181, and valine 196–valine 216. An ABC transmembrane type-1 domain is found at leucine 28–arginine 217.

Belongs to the binding-protein-dependent transport system permease family. HisMQ subfamily.

It localises to the cell inner membrane. Functionally, probably part of the binding-protein-dependent transport system y4tEFGH for an amino acid. Probably responsible for the translocation of the substrate across the membrane. This chain is Probable amino-acid ABC transporter permease protein y4tG, found in Sinorhizobium fredii (strain NBRC 101917 / NGR234).